Consider the following 190-residue polypeptide: Threonylcarbamoyl-AMP synthase (190 aa).

In terms of domain architecture, YrdC-like spans Gly-7–Gly-190.

The protein belongs to the SUA5 family. TsaC subfamily.

It is found in the cytoplasm. The enzyme catalyses L-threonine + hydrogencarbonate + ATP = L-threonylcarbamoyladenylate + diphosphate + H2O. Its function is as follows. Required for the formation of a threonylcarbamoyl group on adenosine at position 37 (t(6)A37) in tRNAs that read codons beginning with adenine. Catalyzes the conversion of L-threonine, HCO(3)(-)/CO(2) and ATP to give threonylcarbamoyl-AMP (TC-AMP) as the acyladenylate intermediate, with the release of diphosphate. The protein is Threonylcarbamoyl-AMP synthase of Escherichia coli O1:K1 / APEC.